The following is a 130-amino-acid chain: Serum amyloid A-4 protein (130 aa).

The N-terminal stretch at Met1–Gly18 is a signal peptide. Residues Glu109–Phe130 are disordered. A compositionally biased stretch (basic and acidic residues) spans Phe121–Phe130.

It belongs to the SAA family. Apolipoprotein of the HDL complex. Expressed by the liver; secreted in plasma.

It localises to the secreted. Functionally, major acute phase reactant. This chain is Serum amyloid A-4 protein, found in Mus musculus (Mouse).